Consider the following 95-residue polypeptide: ESAT-6-like protein EsxA (95 aa).

The protein belongs to the WXG100 family. ESAT-6 subfamily. As to quaternary structure, forms a tight 1:1 complex with EsxB.

In Corynebacterium diphtheriae (strain ATCC 700971 / NCTC 13129 / Biotype gravis), this protein is ESAT-6-like protein EsxA.